Consider the following 1082-residue polypeptide: uncharacterized protein (1082 aa).

Positions 50–319 (TTMTGGVSLA…LDNRPIGVLF (270 aa)) constitute a PNPLA domain. Positions 120 to 124 (GTSAG) match the GXSXG motif. Ser122 acts as the Nucleophile in catalysis. Asp306 functions as the Proton acceptor in the catalytic mechanism. The short motif at 306–308 (DGG) is the DGA/G element. A run of 4 helical transmembrane segments spans residues 959-979 (IARS…AAAI), 982-1002 (VTVF…LVVL), 1012-1032 (LFAL…TPVV), and 1057-1077 (WWHP…IAAA).

The protein resides in the cell membrane. This is an uncharacterized protein from Mycobacterium tuberculosis (strain ATCC 25618 / H37Rv).